The sequence spans 122 residues: Large ribosomal subunit protein uL18 (122 aa).

Over residues 1 to 19 (MTKLSRKLQTQKRHRRLRR) the composition is skewed to basic residues. Positions 1-21 (MTKLSRKLQTQKRHRRLRRSV) are disordered.

Belongs to the universal ribosomal protein uL18 family. Part of the 50S ribosomal subunit; part of the 5S rRNA/L5/L18/L25 subcomplex. Contacts the 5S and 23S rRNAs.

Functionally, this is one of the proteins that bind and probably mediate the attachment of the 5S RNA into the large ribosomal subunit, where it forms part of the central protuberance. This chain is Large ribosomal subunit protein uL18, found in Prochlorococcus marinus (strain MIT 9312).